The sequence spans 193 residues: Holliday junction branch migration complex subunit RuvA (193 aa).

Residues 1–64 are domain I; that stretch reads MIGRIAGILL…EDAHLLYGFL (64 aa). Residues 65–139 are domain II; that stretch reads TPQERTTFRE…GKLGADLGAL (75 aa). A flexible linker region spans residues 139 to 143; the sequence is LAGAA. The segment at 144–193 is domain III; it reads SPSDHAADILNALVALGYSEKEGLAAIKNVPAGTGVSDGIKLALKALSKA.

Belongs to the RuvA family. As to quaternary structure, homotetramer. Forms an RuvA(8)-RuvB(12)-Holliday junction (HJ) complex. HJ DNA is sandwiched between 2 RuvA tetramers; dsDNA enters through RuvA and exits via RuvB. An RuvB hexamer assembles on each DNA strand where it exits the tetramer. Each RuvB hexamer is contacted by two RuvA subunits (via domain III) on 2 adjacent RuvB subunits; this complex drives branch migration. In the full resolvosome a probable DNA-RuvA(4)-RuvB(12)-RuvC(2) complex forms which resolves the HJ.

Its subcellular location is the cytoplasm. Functionally, the RuvA-RuvB-RuvC complex processes Holliday junction (HJ) DNA during genetic recombination and DNA repair, while the RuvA-RuvB complex plays an important role in the rescue of blocked DNA replication forks via replication fork reversal (RFR). RuvA specifically binds to HJ cruciform DNA, conferring on it an open structure. The RuvB hexamer acts as an ATP-dependent pump, pulling dsDNA into and through the RuvAB complex. HJ branch migration allows RuvC to scan DNA until it finds its consensus sequence, where it cleaves and resolves the cruciform DNA. The protein is Holliday junction branch migration complex subunit RuvA of Burkholderia vietnamiensis (strain G4 / LMG 22486) (Burkholderia cepacia (strain R1808)).